A 1260-amino-acid polypeptide reads, in one-letter code: UPF0507 protein LELG_01076 (1260 aa).

The VPS9 domain occupies 336 to 493 (ADYDPSATKV…LSDNDKGLNT (158 aa)).

The protein belongs to the UPF0507 family.

This is UPF0507 protein LELG_01076 from Lodderomyces elongisporus (strain ATCC 11503 / CBS 2605 / JCM 1781 / NBRC 1676 / NRRL YB-4239) (Yeast).